A 153-amino-acid chain; its full sequence is Nucleoside diphosphate kinase (153 aa).

ATP is bound by residues Lys13, Phe61, Arg89, Thr95, Arg106, and Asn116. The active-site Pros-phosphohistidine intermediate is the His119.

The protein belongs to the NDK family. The cofactor is Mg(2+). In terms of tissue distribution, highest levels in the liver and kidney with lower levels in the heart, brain and breast muscle.

The protein localises to the cytoplasm. It localises to the cell membrane. It catalyses the reaction a 2'-deoxyribonucleoside 5'-diphosphate + ATP = a 2'-deoxyribonucleoside 5'-triphosphate + ADP. The enzyme catalyses a ribonucleoside 5'-diphosphate + ATP = a ribonucleoside 5'-triphosphate + ADP. Functionally, major role in the synthesis of nucleoside triphosphates other than ATP. The ATP gamma phosphate is transferred to the NDP beta phosphate via a ping-pong mechanism, using a phosphorylated active-site intermediate. The chain is Nucleoside diphosphate kinase from Columba livia (Rock dove).